Consider the following 666-residue polypeptide: uncharacterized protein (666 aa).

The 291-residue stretch at 263–553 folds into the RNB domain; that stretch reads RFDLTTLKTY…THFQMKAYLR (291 aa).

Belongs to the RNR ribonuclease family.

This is an uncharacterized protein from Synechocystis sp. (strain ATCC 27184 / PCC 6803 / Kazusa).